The chain runs to 517 residues: Bifunctional purine biosynthesis protein PurH (517 aa).

Positions 1–146 constitute an MGS-like domain; it reads MAPIALLSVS…KNHAHVAVLT (146 aa).

It belongs to the PurH family.

The enzyme catalyses (6R)-10-formyltetrahydrofolate + 5-amino-1-(5-phospho-beta-D-ribosyl)imidazole-4-carboxamide = 5-formamido-1-(5-phospho-D-ribosyl)imidazole-4-carboxamide + (6S)-5,6,7,8-tetrahydrofolate. It catalyses the reaction IMP + H2O = 5-formamido-1-(5-phospho-D-ribosyl)imidazole-4-carboxamide. It functions in the pathway purine metabolism; IMP biosynthesis via de novo pathway; 5-formamido-1-(5-phospho-D-ribosyl)imidazole-4-carboxamide from 5-amino-1-(5-phospho-D-ribosyl)imidazole-4-carboxamide (10-formyl THF route): step 1/1. The protein operates within purine metabolism; IMP biosynthesis via de novo pathway; IMP from 5-formamido-1-(5-phospho-D-ribosyl)imidazole-4-carboxamide: step 1/1. The protein is Bifunctional purine biosynthesis protein PurH of Prochlorococcus marinus (strain MIT 9313).